An 85-amino-acid chain; its full sequence is Small ribosomal subunit protein uS17 (85 aa).

It belongs to the universal ribosomal protein uS17 family. In terms of assembly, part of the 30S ribosomal subunit.

One of the primary rRNA binding proteins, it binds specifically to the 5'-end of 16S ribosomal RNA. This Spiroplasma citri protein is Small ribosomal subunit protein uS17.